Here is a 550-residue protein sequence, read N- to C-terminus: Crystal protein (550 aa).

An N-terminal signal peptide occupies residues 1–19; that stretch reads MNKIIILLIILLSFDIISA. A disulfide bond links Cys-91 and Cys-111. Asn-156 carries N-linked (GlcNAc...) asparagine glycosylation. Ser-215 acts as the Acyl-ester intermediate in catalysis. The cysteines at positions 267 and 274 are disulfide-linked. Catalysis depends on charge relay system residues Glu-340 and His-443. N-linked (GlcNAc...) asparagine glycosylation is present at Asn-506.

Belongs to the type-B carboxylesterase/lipase family.

It is found in the cytoplasmic vesicle. Its subcellular location is the esterosome membrane. The sequence is that of Crystal protein (cryS) from Dictyostelium discoideum (Social amoeba).